The primary structure comprises 143 residues: UPF0102 protein Acid345_3985 (143 aa).

Belongs to the UPF0102 family.

This is UPF0102 protein Acid345_3985 from Koribacter versatilis (strain Ellin345).